A 257-amino-acid polypeptide reads, in one-letter code: Homeobox protein goosecoid (257 aa).

Positions 160 to 219 (KRRHRTIFTDEQLEALENLFQETKYPDVGTREQLARKVHLREEKVEVWFKNRRAKWRRQK) form a DNA-binding region, homeobox. The disordered stretch occupies residues 213–257 (AKWRRQKRSSSEESENAEKWNKTSSSKASPEKREEEGKSDLDSDS). Basic and acidic residues predominate over residues 241–257 (SPEKREEEGKSDLDSDS).

Belongs to the paired homeobox family. Bicoid subfamily.

It is found in the nucleus. Its function is as follows. Regulates chordin (CHRD). May play a role in spatial programing within discrete embryonic fields or lineage compartments during organogenesis. In concert with NKX3-2, plays a role in defining the structural components of the middle ear; required for the development of the entire tympanic ring. Probably involved in the regulatory networks that define neural crest cell fate specification and determine mesoderm cell lineages in mammals. This Homo sapiens (Human) protein is Homeobox protein goosecoid (GSC).